The chain runs to 245 residues: Nisin immunity protein (245 aa).

A signal peptide spans 1 to 19 (MRRYLILIVALIGITGLSG). A lipid anchor (N-palmitoyl cysteine) is attached at Cys20. A lipid anchor (S-diacylglycerol cysteine) is attached at Cys20.

It localises to the cell membrane. Functionally, involved in immunity against exogenously supplied nisin. This is Nisin immunity protein (nisI) from Lactococcus lactis subsp. lactis (Streptococcus lactis).